A 417-amino-acid chain; its full sequence is MLKREMNIADYDADLWQAMEQEVVRQEEHIELIASENYTSPRVMQAQGSQLTNKYAEGYPGKRYYGGCEYVDIVEQLAIDRAKALFGADYANVQPHSGSQANFAVYTALLQPGDTILGMNLAHGGHLTHGSPVNLSGKLYKVIPYGIDESGKIDYDEMAELARTHQPKMIVGGFSAYSGVVDWAKMREIADSIGAYLFVDMAHVAGLIAADVYPNPVPHAHIVTTTTHKTLAGPRGGLILAKGGDEDLYKKLNSAVFPGGQGGPLMHVIAGKAVALKEAMEPEFKVYQQQVAKNAKAMVEVFLSRGFNVVSGATSNHLFLLDLVSKNLTGKEADAALGRANITVNKNSVPNDPKSPFVTSGIRIGTPAATRRGFKEAEVRELAGWICDVLDNINDEATIERVKQKVLDICARFPVYA.

Residues leucine 121 and 125 to 127 (GHL) contribute to the (6S)-5,6,7,8-tetrahydrofolate site. Residue lysine 229 is modified to N6-(pyridoxal phosphate)lysine. 355 to 357 (SPF) provides a ligand contact to (6S)-5,6,7,8-tetrahydrofolate.

It belongs to the SHMT family. In terms of assembly, homodimer. Pyridoxal 5'-phosphate serves as cofactor.

The protein resides in the cytoplasm. It carries out the reaction (6R)-5,10-methylene-5,6,7,8-tetrahydrofolate + glycine + H2O = (6S)-5,6,7,8-tetrahydrofolate + L-serine. It participates in one-carbon metabolism; tetrahydrofolate interconversion. Its pathway is amino-acid biosynthesis; glycine biosynthesis; glycine from L-serine: step 1/1. Catalyzes the reversible interconversion of serine and glycine with tetrahydrofolate (THF) serving as the one-carbon carrier. This reaction serves as the major source of one-carbon groups required for the biosynthesis of purines, thymidylate, methionine, and other important biomolecules. Also exhibits THF-independent aldolase activity toward beta-hydroxyamino acids, producing glycine and aldehydes, via a retro-aldol mechanism. This chain is Serine hydroxymethyltransferase 1, found in Pectobacterium atrosepticum (strain SCRI 1043 / ATCC BAA-672) (Erwinia carotovora subsp. atroseptica).